A 366-amino-acid polypeptide reads, in one-letter code: Aminomethyltransferase (366 aa).

It belongs to the GcvT family. In terms of assembly, the glycine cleavage system is composed of four proteins: P, T, L and H.

It carries out the reaction N(6)-[(R)-S(8)-aminomethyldihydrolipoyl]-L-lysyl-[protein] + (6S)-5,6,7,8-tetrahydrofolate = N(6)-[(R)-dihydrolipoyl]-L-lysyl-[protein] + (6R)-5,10-methylene-5,6,7,8-tetrahydrofolate + NH4(+). Functionally, the glycine cleavage system catalyzes the degradation of glycine. The protein is Aminomethyltransferase of Bordetella petrii (strain ATCC BAA-461 / DSM 12804 / CCUG 43448).